The chain runs to 524 residues: Chitinase D (524 aa).

The N-terminal stretch at 1–30 (MNQAVRFRPVITFALAFILIITWFAPRADA) is a signal peptide. Residues 95–180 (VPAGLTSSLV…TSLSVTTSTG (86 aa)) enclose the Fibronectin type-III domain. The GH18 domain maps to 190-514 (KWLIGYWHNF…NAHRPFLNGL (325 aa)). E303 acts as the Proton donor in catalysis.

Belongs to the glycosyl hydrolase 18 family. Chitinase class II subfamily.

The enzyme catalyses Random endo-hydrolysis of N-acetyl-beta-D-glucosaminide (1-&gt;4)-beta-linkages in chitin and chitodextrins.. The polypeptide is Chitinase D (chiD) (Niallia circulans (Bacillus circulans)).